Consider the following 235-residue polypeptide: Orotidine 5'-phosphate decarboxylase (235 aa).

Substrate is bound by residues D10, K33, 60 to 69 (DLKMHDIPNT), T123, R185, Q194, G214, and R215. K62 serves as the catalytic Proton donor.

The protein belongs to the OMP decarboxylase family. Type 1 subfamily. Homodimer.

It catalyses the reaction orotidine 5'-phosphate + H(+) = UMP + CO2. Its pathway is pyrimidine metabolism; UMP biosynthesis via de novo pathway; UMP from orotate: step 2/2. Catalyzes the decarboxylation of orotidine 5'-monophosphate (OMP) to uridine 5'-monophosphate (UMP). This is Orotidine 5'-phosphate decarboxylase from Lactobacillus acidophilus (strain ATCC 700396 / NCK56 / N2 / NCFM).